The chain runs to 339 residues: Annexin A2 (339 aa).

Position 2 is an N-acetylserine (S2). Positions 2–24 (STVHEILCKLSLEGDHSTPPSAY) are S100A10-binding site. Y24 is modified (phosphotyrosine; by SRC). Position 26 is a phosphoserine; by PKC (S26). Annexin repeat units follow at residues 33-104 (FDAE…GLLK) and 105-176 (TPAQ…ALAK). An N6-acetyllysine; alternate modification is found at K49. Residue K49 forms a Glycyl lysine isopeptide (Lys-Gly) (interchain with G-Cter in SUMO1); alternate linkage. Residue K49 forms a Glycyl lysine isopeptide (Lys-Gly) (interchain with G-Cter in SUMO2); alternate linkage. The residue at position 152 (K152) is an N6-acetyllysine. Phosphoserine is present on S184. Annexin repeat units lie at residues 189–261 (ELID…NLVQ) and 265–336 (NKPL…YLCG). A Phosphotyrosine modification is found at Y199. N6-acetyllysine is present on K227.

Belongs to the annexin family. In terms of assembly, heterotetramer containing 2 light chains of S100A10/p11 and 2 heavy chains of ANXA2/p36. Interacts with ATP1B1. Interacts with DYSF. Interacts with COCH. Interacts (via repeat Annexin 1) with PCSK9 (via the C-terminal domain); the interaction inhibits the degradation of LDLR. Interacts with CEACAM1 (via the cytoplasmic domain); this interaction is regulated by phosphorylation of CEACAM1. Interacts with APPL2 and APPL1; targets APPL2 to endosomes and acting in parallel to RAB5A. Interacts with S100A4. May interact with UBAP2. Interacts with PLEKHG4B; this interaction is required for PLEKHG4B localization to cell-cell adhesions. As to quaternary structure, (Microbial infection) Interacts with human cytomegalovirus (HCMV). (Microbial infection) Interacts with M.pneumoniae CARDS toxin; CARDS probably uses this protein as a receptor. A portion of internalized CARDS remains associated with intracellular annexin 2. In terms of processing, phosphorylation of Tyr-24 enhances heat stress-induced translocation to the cell surface. Post-translationally, ISGylated.

The protein resides in the secreted. It localises to the extracellular space. Its subcellular location is the extracellular matrix. The protein localises to the basement membrane. It is found in the melanosome. In terms of biological role, calcium-regulated membrane-binding protein whose affinity for calcium is greatly enhanced by anionic phospholipids. It binds two calcium ions with high affinity. May be involved in heat-stress response. Inhibits PCSK9-enhanced LDLR degradation, probably reduces PCSK9 protein levels via a translational mechanism but also competes with LDLR for binding with PCSK9. Binds to endosomes damaged by phagocytosis of particulate wear debris and participates in endosomal membrane stabilization, thereby limiting NLRP3 inflammasome activation. Required for endothelial cell surface plasmin generation and may support fibrinolytic surveillance and neoangiogenesis. (Microbial infection) Binds M.pneumoniae CARDS toxin, probably serves as one receptor for this pathogen. When ANXA2 is down-regulated by siRNA, less toxin binds to human cells and less vacuolization (a symptom of M.pneumoniae infection) is seen. The polypeptide is Annexin A2 (ANXA2) (Homo sapiens (Human)).